Here is a 100-residue protein sequence, read N- to C-terminus: Co-chaperonin GroES (100 aa).

The protein belongs to the GroES chaperonin family. Heptamer of 7 subunits arranged in a ring. Interacts with the chaperonin GroEL.

Its subcellular location is the cytoplasm. Its function is as follows. Together with the chaperonin GroEL, plays an essential role in assisting protein folding. The GroEL-GroES system forms a nano-cage that allows encapsulation of the non-native substrate proteins and provides a physical environment optimized to promote and accelerate protein folding. GroES binds to the apical surface of the GroEL ring, thereby capping the opening of the GroEL channel. The polypeptide is Co-chaperonin GroES (Mycobacterium marinum (strain ATCC BAA-535 / M)).